Here is a 160-residue protein sequence, read N- to C-terminus: SsrA-binding protein (160 aa).

It belongs to the SmpB family.

It is found in the cytoplasm. Its function is as follows. Required for rescue of stalled ribosomes mediated by trans-translation. Binds to transfer-messenger RNA (tmRNA), required for stable association of tmRNA with ribosomes. tmRNA and SmpB together mimic tRNA shape, replacing the anticodon stem-loop with SmpB. tmRNA is encoded by the ssrA gene; the 2 termini fold to resemble tRNA(Ala) and it encodes a 'tag peptide', a short internal open reading frame. During trans-translation Ala-aminoacylated tmRNA acts like a tRNA, entering the A-site of stalled ribosomes, displacing the stalled mRNA. The ribosome then switches to translate the ORF on the tmRNA; the nascent peptide is terminated with the 'tag peptide' encoded by the tmRNA and targeted for degradation. The ribosome is freed to recommence translation, which seems to be the essential function of trans-translation. The chain is SsrA-binding protein from Citrobacter koseri (strain ATCC BAA-895 / CDC 4225-83 / SGSC4696).